The sequence spans 1114 residues: Translation initiation factor IF-2 (1114 aa).

2 disordered regions span residues 69–102 (SIKK…PLLI) and 181–507 (INNN…KRRA). Basic and acidic residues predominate over residues 85-96 (SKKETPLKDNSN). A compositionally biased stretch (polar residues) spans 181–198 (INNNVKSNESSQNISSAG). Over residues 240-251 (INPNKQNNKQNI) the composition is skewed to low complexity. Over residues 252 to 261 (AFKQTGSNRI) the composition is skewed to polar residues. 3 stretches are compositionally biased toward low complexity: residues 262–278 (GSPN…GLRN), 290–309 (NRQG…GLRN), and 321–337 (NRQG…NRPG). The segment covering 365–375 (NSEKDNKDKNN) has biased composition (basic and acidic residues). Residues 376 to 385 (NAKQNINGPN) show a composition bias toward low complexity. Residues 417 to 431 (GKTDWDDSAKLEALR) show a composition bias toward basic and acidic residues. A compositionally biased stretch (basic residues) spans 489 to 505 (KQFKKKKKETTRQRQKR). A tr-type G domain is found at 606–778 (RRPPVITVMG…ILLVSEVEDL (173 aa)). Positions 615–622 (GHVDHGKT) are G1. 615 to 622 (GHVDHGKT) contributes to the GTP binding site. The tract at residues 640–644 (GITQH) is G2. Residues 665 to 668 (DTPG) form a G3 region. Residues 665–669 (DTPGH) and 719–722 (NKID) contribute to the GTP site. Positions 719–722 (NKID) are G4. The tract at residues 755-757 (SAI) is G5.

It belongs to the TRAFAC class translation factor GTPase superfamily. Classic translation factor GTPase family. IF-2 subfamily.

It localises to the cytoplasm. One of the essential components for the initiation of protein synthesis. Protects formylmethionyl-tRNA from spontaneous hydrolysis and promotes its binding to the 30S ribosomal subunits. Also involved in the hydrolysis of GTP during the formation of the 70S ribosomal complex. The polypeptide is Translation initiation factor IF-2 (Prochlorococcus marinus (strain MIT 9301)).